Reading from the N-terminus, the 668-residue chain is Threonine--tRNA ligase (668 aa).

The region spanning 1-64 is the TGS domain; it reads MSEAIFLTFP…ADGKIEIITR (64 aa). The segment at 245 to 553 is catalytic; it reads DHRKLGREMD…LIENFAGHLP (309 aa). Positions 347, 398, and 530 each coordinate Zn(2+).

The protein belongs to the class-II aminoacyl-tRNA synthetase family. Homodimer. It depends on Zn(2+) as a cofactor.

It localises to the cytoplasm. The catalysed reaction is tRNA(Thr) + L-threonine + ATP = L-threonyl-tRNA(Thr) + AMP + diphosphate + H(+). In terms of biological role, catalyzes the attachment of threonine to tRNA(Thr) in a two-step reaction: L-threonine is first activated by ATP to form Thr-AMP and then transferred to the acceptor end of tRNA(Thr). Also edits incorrectly charged L-seryl-tRNA(Thr). This is Threonine--tRNA ligase from Rhizobium leguminosarum bv. trifolii (strain WSM2304).